Reading from the N-terminus, the 779-residue chain is Endoribonuclease YSH1 (779 aa).

Residues His68, His70, Asp72, His73, His163, and Asp184 each coordinate Zn(2+). Residue His408 is the Proton donor of the active site. Residue His430 participates in Zn(2+) binding. Ser517 is modified (phosphoserine; by ATM or ATR).

The protein belongs to the metallo-beta-lactamase superfamily. RNA-metabolizing metallo-beta-lactamase-like family. CPSF2/YSH1 subfamily. In terms of assembly, component of the cleavage and polyadenylation factor (CPF) complex, which is composed of at least PTI1, SYC1, SSU72, GLC7, MPE1, REF2, PFS2, PTA1, YSH1/BRR5, SWD2, CFT2/YDH1, YTH1, CFT1/YHH1, FIP1 and PAP1. Interacts with FIP1, PFS2, RNA14 and YTH1. It depends on Zn(2+) as a cofactor.

Its subcellular location is the nucleus. Functionally, component of the cleavage and polyadenylation factor (CPF) complex, which plays a key role in polyadenylation-dependent pre-mRNA 3'-end formation and cooperates with cleavage factors including the CFIA complex and NAB4/CFIB. Has endonuclease activity. The sequence is that of Endoribonuclease YSH1 (YSH1) from Saccharomyces cerevisiae (strain ATCC 204508 / S288c) (Baker's yeast).